The chain runs to 546 residues: CTP synthase (546 aa).

The segment at 1 to 266 (MTTRYIFVTG…DDLVVKRFGL (266 aa)) is amidoligase domain. Ser-14 lines the CTP pocket. UTP is bound at residue Ser-14. ATP-binding positions include 15 to 20 (SLGKGI) and Asp-72. Asp-72 and Glu-140 together coordinate Mg(2+). CTP-binding positions include 147–149 (DIE), 187–192 (KTKPTQ), and Lys-223. Residues 187–192 (KTKPTQ) and Lys-223 contribute to the UTP site. 239 to 241 (KDV) lines the ATP pocket. Positions 291–542 (VIGMVGKYIE…VAAASAHQKR (252 aa)) constitute a Glutamine amidotransferase type-1 domain. Gly-352 serves as a coordination point for L-glutamine. Cys-379 serves as the catalytic Nucleophile; for glutamine hydrolysis. Residues 380-383 (LGMQ), Glu-403, and Arg-470 contribute to the L-glutamine site. Residues His-515 and Glu-517 contribute to the active site.

It belongs to the CTP synthase family. As to quaternary structure, homotetramer.

The enzyme catalyses UTP + L-glutamine + ATP + H2O = CTP + L-glutamate + ADP + phosphate + 2 H(+). It carries out the reaction L-glutamine + H2O = L-glutamate + NH4(+). The catalysed reaction is UTP + NH4(+) + ATP = CTP + ADP + phosphate + 2 H(+). The protein operates within pyrimidine metabolism; CTP biosynthesis via de novo pathway; CTP from UDP: step 2/2. Its activity is regulated as follows. Allosterically activated by GTP, when glutamine is the substrate; GTP has no effect on the reaction when ammonia is the substrate. The allosteric effector GTP functions by stabilizing the protein conformation that binds the tetrahedral intermediate(s) formed during glutamine hydrolysis. Inhibited by the product CTP, via allosteric rather than competitive inhibition. Its function is as follows. Catalyzes the ATP-dependent amination of UTP to CTP with either L-glutamine or ammonia as the source of nitrogen. Regulates intracellular CTP levels through interactions with the four ribonucleotide triphosphates. The chain is CTP synthase from Shewanella sp. (strain ANA-3).